Here is a 445-residue protein sequence, read N- to C-terminus: Glycine--tRNA ligase (445 aa).

Residues arginine 97 and glutamate 145 each coordinate substrate. ATP is bound by residues 177–179 (RNE), 187–192 (FRTCEF), 262–263 (EV), and 308–311 (GLTR). A substrate-binding site is contributed by 192-196 (FEQME). 304-308 (ETSAG) contributes to the substrate binding site.

This sequence belongs to the class-II aminoacyl-tRNA synthetase family. In terms of assembly, homodimer.

It is found in the cytoplasm. It catalyses the reaction tRNA(Gly) + glycine + ATP = glycyl-tRNA(Gly) + AMP + diphosphate. In terms of biological role, catalyzes the attachment of glycine to tRNA(Gly). This Borreliella burgdorferi (strain ZS7) (Borrelia burgdorferi) protein is Glycine--tRNA ligase.